A 298-amino-acid polypeptide reads, in one-letter code: Transcription factor SRM1 (298 aa).

Positions 7-62 constitute an SANT domain; it reads SDGSVWSREDDIAFERALANNTDESEERWEKIAADVPGKSVEQIKEHYELLVEDVT. Residues 68 to 118 are disordered; sequence CVPLPAYGSPEGSNGHAGDEGASSKKGGNSHAGESNQAGKSKSDQERRKGI. Residues 108 to 118 show a composition bias toward basic and acidic residues; it reads SKSDQERRKGI. Positions 111-168 constitute an HTH myb-type domain; sequence DQERRKGIAWTEDEHRLFLLGLDKYGKGDWRSISRNFVVTRTPTQVASHAQKYFIRLN. Positions 140–164 form a DNA-binding region, H-T-H motif; that stretch reads WRSISRNFVVTRTPTQVASHAQKYF. Residues 182-200 are compositionally biased toward polar residues; sequence ITSVGNADVSTPQGPITGQ. The segment at 182-245 is disordered; the sequence is ITSVGNADVS…GPPMYGTPAI (64 aa). The segment covering 201-215 has biased composition (low complexity); that stretch reads NNSNNNNNNNNNNSS.

As to expression, expressed in young seedlings, developing leaves, sepals and trichomes.

It is found in the nucleus. Transcription activator that coordinates abscisic acid (ABA) biosynthesis and signaling-related genes via binding to the specific promoter motif 5'-(A/T)AACCAT-3'. Represses ABA-mediated salt (e.g. NaCl and KCl) stress tolerance. Regulates leaf shape and promotes vegetative growth. The sequence is that of Transcription factor SRM1 from Arabidopsis thaliana (Mouse-ear cress).